The primary structure comprises 330 residues: Phospho-N-acetylmuramoyl-pentapeptide-transferase (330 aa).

A run of 10 helical transmembrane segments spans residues 3-23 (SVVL…SSFI), 49-69 (TPTM…AVVA), 71-91 (PNPA…VGLY), 111-131 (FLLL…YVGV), 145-165 (VLGP…FVIV), 179-199 (GLAA…AFLE), 204-224 (LAII…YNSH), 228-248 (IFMG…AAIL), 256-276 (PVIG…VVVF), and 307-327 (FWIV…FFLY).

The protein belongs to the glycosyltransferase 4 family. MraY subfamily. Requires Mg(2+) as cofactor.

Its subcellular location is the cell membrane. It carries out the reaction UDP-N-acetyl-alpha-D-muramoyl-L-alanyl-gamma-D-glutamyl-meso-2,6-diaminopimeloyl-D-alanyl-D-alanine + di-trans,octa-cis-undecaprenyl phosphate = di-trans,octa-cis-undecaprenyl diphospho-N-acetyl-alpha-D-muramoyl-L-alanyl-D-glutamyl-meso-2,6-diaminopimeloyl-D-alanyl-D-alanine + UMP. Its pathway is cell wall biogenesis; peptidoglycan biosynthesis. Catalyzes the initial step of the lipid cycle reactions in the biosynthesis of the cell wall peptidoglycan: transfers peptidoglycan precursor phospho-MurNAc-pentapeptide from UDP-MurNAc-pentapeptide onto the lipid carrier undecaprenyl phosphate, yielding undecaprenyl-pyrophosphoryl-MurNAc-pentapeptide, known as lipid I. This is Phospho-N-acetylmuramoyl-pentapeptide-transferase from Rubrobacter xylanophilus (strain DSM 9941 / JCM 11954 / NBRC 16129 / PRD-1).